The chain runs to 276 residues: Probable transposase for insertion sequence element IS702 (276 aa).

Residues 118-256 form the DDE Tnp4 domain; that stretch reads MDVTESPIER…SNQYRNRHRR (139 aa). 4 residues coordinate a divalent metal cation: aspartate 119, aspartate 170, aspartate 190, and glutamate 234.

The protein belongs to the transposase 11 family. Requires a divalent metal cation as cofactor.

Its function is as follows. Involved in the transposition of the insertion sequence. This chain is Probable transposase for insertion sequence element IS702, found in Microchaete diplosiphon (Fremyella diplosiphon).